The sequence spans 354 residues: Caffeate O-methyltransferase-like protein 2 (354 aa).

S-adenosyl-L-homocysteine is bound by residues G198, D221, M242, and K255. The active-site Proton acceptor is the H259. Active-site residues include E287 and E319.

It belongs to the class I-like SAM-binding methyltransferase superfamily. Cation-independent O-methyltransferase family. COMT subfamily.

The protein is Caffeate O-methyltransferase-like protein 2 of Oryza sativa subsp. japonica (Rice).